The chain runs to 468 residues: Neurexin-1-beta (468 aa).

Residues 1 to 46 (MYQRMLRCGAELGSPGGGSSGGAGGRLALLWIVPLTLSGLLGVAWG) form the signal peptide. Residues 47 to 391 (ASSLGAHHIH…AEVIRESSST (345 aa)) are Extracellular-facing. The region spanning 87–285 (YIFSKGGGQI…DANIAIVGNV (199 aa)) is the Laminin G-like domain. Residues Asp-137 and Val-154 each contribute to the Ca(2+) site. Asn-184 carries N-linked (GlcNAc...) asparagine glycosylation. The tract at residues 201–230 (GNNDNERLAIARQRIPYRLGRVVDEWLLDK) is essential for interaction with CBLN1; modulates interaction affinity with NLGN1, NLGN2 and NLGN3; prevents interaction with DAG1/alpha-dystroglycan; modulates interaction with alpha-latrotoxin. Ca(2+) contacts are provided by Ile-236 and Asn-238. An O-linked (Xyl...) (heparan sulfate) serine glycan is attached at Ser-346. A disordered region spans residues 350 to 381 (PSDDEDIDPCEPSSGGLANPTRVGGREPYPGS). Residues 392 to 414 (TGMVVGIVAAAALCILILLYAMY) form a helical membrane-spanning segment. Residues 415-468 (KYRNRDEGSYHVDESRNYISNSAQSNGAVVKEKQPSSAKSANKNKKNKDKEYYV) are Cytoplasmic-facing. Residues 435 to 468 (NSAQSNGAVVKEKQPSSAKSANKNKKNKDKEYYV) are disordered. Phosphoserine occurs at positions 450, 451, and 454.

It belongs to the neurexin family. As to quaternary structure, the cytoplasmic C-terminal region binds to CASK. Binds NLGN1, NLGN2 and NLGN3, DAG1 (alpha-dystroglycan) and alpha-latrotoxin. Binding to neuroligins is calcium-dependent, and the binding preference ranks as follow: NLGN1 &gt; NLGN4 &gt;&gt; NLGN3 &gt; NLGN2. Interacts with CBLN2 and more weakly with CBLN4. Interacts with CBLN1; interaction is CBLN1 hexamer form-dependent; CBLN1-binding is calcium-independent; isoform 1b does not interact with CBLN1. Interacts with CLSTN3. In terms of processing, N-glycosylated. Post-translationally, O-glycosylated; contains heparan sulfate. Heparan sulfate attachment is required for synapse development by mediating interactions with neuroligins. In terms of tissue distribution, brain.

The protein localises to the presynaptic cell membrane. Neuronal cell surface protein involved in cell recognition and cell adhesion by forming intracellular junctions through binding to neuroligins. Plays a role in formation of synaptic junctions. Functions as part of a trans-synaptic complex by binding to cerebellins and postsynaptic GRID1. This interaction helps regulate the activity of NMDA and AMPA receptors at hippocampal synapses without affecting synapse formation. NRXN1B-CBLN2-GRID1 complex transduce presynaptic signals into postsynaptic NMDAR response. This Rattus norvegicus (Rat) protein is Neurexin-1-beta.